Here is a 512-residue protein sequence, read N- to C-terminus: ATP synthase subunit alpha (512 aa).

169–176 (GDRQTGKT) contributes to the ATP binding site.

It belongs to the ATPase alpha/beta chains family. F-type ATPases have 2 components, CF(1) - the catalytic core - and CF(0) - the membrane proton channel. CF(1) has five subunits: alpha(3), beta(3), gamma(1), delta(1), epsilon(1). CF(0) has four main subunits: a(1), b(1), b'(1) and c(9-12).

Its subcellular location is the cell inner membrane. It carries out the reaction ATP + H2O + 4 H(+)(in) = ADP + phosphate + 5 H(+)(out). Produces ATP from ADP in the presence of a proton gradient across the membrane. The alpha chain is a regulatory subunit. In Roseobacter denitrificans (strain ATCC 33942 / OCh 114) (Erythrobacter sp. (strain OCh 114)), this protein is ATP synthase subunit alpha.